The primary structure comprises 291 residues: Lipoyl synthase (291 aa).

Residues C36, C41, C47, C62, C66, C69, and S275 each contribute to the [4Fe-4S] cluster site. Residues F48–K264 form the Radical SAM core domain.

It belongs to the radical SAM superfamily. Lipoyl synthase family. [4Fe-4S] cluster serves as cofactor.

It localises to the cytoplasm. The enzyme catalyses [[Fe-S] cluster scaffold protein carrying a second [4Fe-4S](2+) cluster] + N(6)-octanoyl-L-lysyl-[protein] + 2 oxidized [2Fe-2S]-[ferredoxin] + 2 S-adenosyl-L-methionine + 4 H(+) = [[Fe-S] cluster scaffold protein] + N(6)-[(R)-dihydrolipoyl]-L-lysyl-[protein] + 4 Fe(3+) + 2 hydrogen sulfide + 2 5'-deoxyadenosine + 2 L-methionine + 2 reduced [2Fe-2S]-[ferredoxin]. The protein operates within protein modification; protein lipoylation via endogenous pathway; protein N(6)-(lipoyl)lysine from octanoyl-[acyl-carrier-protein]: step 2/2. In terms of biological role, catalyzes the radical-mediated insertion of two sulfur atoms into the C-6 and C-8 positions of the octanoyl moiety bound to the lipoyl domains of lipoate-dependent enzymes, thereby converting the octanoylated domains into lipoylated derivatives. This is Lipoyl synthase from Caldicellulosiruptor bescii (strain ATCC BAA-1888 / DSM 6725 / KCTC 15123 / Z-1320) (Anaerocellum thermophilum).